A 120-amino-acid polypeptide reads, in one-letter code: Protein RALF-like 1 (120 aa).

Positions 1–26 (MDKSFTLFLTLTILVVFIISSPPVQA) are cleaved as a signal peptide. Positions 27 to 71 (GFANDLGGVAWATTGDNGSGCHGSIAECIGAEEEEMDSEINRRIL) are cleaved as a propeptide — removed in mature form. N-linked (GlcNAc...) asparagine glycosylation occurs at asparagine 43. Cystine bridges form between cysteine 89–cysteine 99 and cysteine 112–cysteine 118.

Belongs to the plant rapid alkalinization factor (RALF) family. In terms of assembly, interacts with FER and promotes its phosphorylation and subsequent activation. Post-translationally, proteolytically cleaved, probably by S1P, a subtilisin-like serine protease (subtilase). As to expression, expressed in roots and stems.

The protein localises to the secreted. Functionally, cell signaling peptide that may regulate plant stress, growth, and development. Mediates a rapid alkalinization of extracellular space by mediating a transient increase in the cytoplasmic Ca(2+) concentration leading to a calcium-dependent signaling events through a cell surface receptor and a concomitant activation of some intracellular mitogen-activated protein kinases. Mostly active in roots. Prevents plant growth (e.g. root and leaf length). Suppresses cell elongation of the primary root by activating the cell surface receptor FER and triggering phosphorylation of AHA2 and subsequent extracellular alkalinization. The sequence is that of Protein RALF-like 1 (RALF1) from Arabidopsis thaliana (Mouse-ear cress).